We begin with the raw amino-acid sequence, 305 residues long: Glyceraldehyde-3-phosphate dehydrogenase 2, cytosolic (305 aa).

2 residues coordinate NAD(+): Asp3 and Arg50. D-glyceraldehyde 3-phosphate is bound by residues 121–123 (SCT), Thr152, 181–182 (TG), and Arg204. Residue Cys122 is the Nucleophile of the active site. Asn286 contacts NAD(+).

The protein belongs to the glyceraldehyde-3-phosphate dehydrogenase family. As to quaternary structure, homotetramer.

The protein localises to the cytoplasm. It carries out the reaction D-glyceraldehyde 3-phosphate + phosphate + NAD(+) = (2R)-3-phospho-glyceroyl phosphate + NADH + H(+). Its pathway is carbohydrate degradation; glycolysis; pyruvate from D-glyceraldehyde 3-phosphate: step 1/5. Key enzyme in glycolysis that catalyzes the first step of the pathway by converting D-glyceraldehyde 3-phosphate (G3P) into 3-phospho-D-glyceroyl phosphate. Essential for the maintenance of cellular ATP levels and carbohydrate metabolism. This is Glyceraldehyde-3-phosphate dehydrogenase 2, cytosolic (GAPC) from Hordeum vulgare (Barley).